An 86-amino-acid polypeptide reads, in one-letter code: UPF0335 protein BR1752/BS1330_I1746 (86 aa).

This sequence belongs to the UPF0335 family.

The chain is UPF0335 protein BR1752/BS1330_I1746 from Brucella suis biovar 1 (strain 1330).